The primary structure comprises 54 residues: Large ribosomal subunit protein uL15 (54 aa).

Residues 1 to 30 (MPSRLRXTRKLRGHVSHGHGRIGKHRKHPG) are compositionally biased toward basic residues. The interval 1-42 (MPSRLRXTRKLRGHVSHGHGRIGKHRKHPGGRGNAGGMHHHR) is disordered. Histidine 39 bears the (3S)-3-hydroxyhistidine mark. Lysine 47 is subject to N6-acetyllysine.

It belongs to the universal ribosomal protein uL15 family. As to quaternary structure, component of the large ribosomal subunit. In terms of processing, hydroxylated on His-39 by MINA.

The protein resides in the cytoplasm. Functionally, component of the large ribosomal subunit. The ribosome is a large ribonucleoprotein complex responsible for the synthesis of proteins in the cell. The sequence is that of Large ribosomal subunit protein uL15 (RPL27A) from Sus scrofa (Pig).